The following is a 472-amino-acid chain: Probable diguanylate cyclase DgcF (472 aa).

The next 8 membrane-spanning stretches (helical) occupy residues 21-41 (SIAI…LRLV), 44-64 (LSLF…YVWL), 90-110 (VSLA…LLVV), 128-148 (LFNY…IGSV), 167-187 (FSTG…GVLP), 198-218 (IALI…SLAF), 237-257 (LLTF…VIDI), and 273-293 (LGIA…AAIN). Positions 330-467 (QHLTVMLLDI…GRNRTSTMRY (138 aa)) constitute a GGDEF domain. Asp-338 and Ile-339 together coordinate Mg(2+). The substrate site is built by Asn-346, His-351, and Asp-355. Glu-381 is a Mg(2+) binding site.

In terms of assembly, homodimer. Requires Mg(2+) as cofactor.

Its subcellular location is the cell membrane. The enzyme catalyses 2 GTP = 3',3'-c-di-GMP + 2 diphosphate. It functions in the pathway purine metabolism; 3',5'-cyclic di-GMP biosynthesis. Functionally, catalyzes the synthesis of cyclic-di-GMP (c-di-GMP) via the condensation of 2 GTP molecules. This is Probable diguanylate cyclase DgcF from Escherichia coli O157:H7.